A 295-amino-acid chain; its full sequence is MKYKRIVFKVGTSSITRSDGSLSRGKIQTITRQLAALHRAGHELVLVSSGAVAAGFGALGFKKRPVKIADKQASAAVGQGLLMEEYTANLSSDGIVSAQILLSRADFADKRRYQNAGGALSVLLQRRAIPIINENDTVSVEELKIGDNDTLSAQVAAMIQADLLVLLTDIDDLYTGNPNSNPDAVRLDKIEHINHEIIKMAGGSGSANGTGGMLTKIKAATIAAESGVPVYICSSLKPDSLAEAAEHQADGSFFVPRAKGLRTQKQWLAFYSESRGSVYVDEGAEHALSEQGKAC.

K9 provides a ligand contact to ATP. Residues S49, D136, and N148 each coordinate substrate. ATP is bound by residues 168–169 (TD) and 210–216 (TGGMLTK).

This sequence belongs to the glutamate 5-kinase family.

The protein localises to the cytoplasm. It catalyses the reaction L-glutamate + ATP = L-glutamyl 5-phosphate + ADP. Its pathway is amino-acid biosynthesis; L-proline biosynthesis; L-glutamate 5-semialdehyde from L-glutamate: step 1/2. Its function is as follows. Catalyzes the transfer of a phosphate group to glutamate to form L-glutamate 5-phosphate. The protein is Glutamate 5-kinase of Neisseria gonorrhoeae (strain NCCP11945).